A 343-amino-acid polypeptide reads, in one-letter code: S-adenosylmethionine:tRNA ribosyltransferase-isomerase (343 aa).

This sequence belongs to the QueA family. As to quaternary structure, monomer.

It is found in the cytoplasm. It carries out the reaction 7-aminomethyl-7-carbaguanosine(34) in tRNA + S-adenosyl-L-methionine = epoxyqueuosine(34) in tRNA + adenine + L-methionine + 2 H(+). Its pathway is tRNA modification; tRNA-queuosine biosynthesis. Functionally, transfers and isomerizes the ribose moiety from AdoMet to the 7-aminomethyl group of 7-deazaguanine (preQ1-tRNA) to give epoxyqueuosine (oQ-tRNA). The protein is S-adenosylmethionine:tRNA ribosyltransferase-isomerase of Geotalea uraniireducens (strain Rf4) (Geobacter uraniireducens).